The following is a 233-amino-acid chain: Ribose-5-phosphate isomerase A (233 aa).

Residues threonine 28–threonine 31, aspartate 85–aspartate 88, and lysine 98–glycine 101 contribute to the substrate site. Glutamate 107 serves as the catalytic Proton acceptor. Lysine 125 lines the substrate pocket.

It belongs to the ribose 5-phosphate isomerase family. As to quaternary structure, homodimer.

The enzyme catalyses aldehydo-D-ribose 5-phosphate = D-ribulose 5-phosphate. The protein operates within carbohydrate degradation; pentose phosphate pathway; D-ribose 5-phosphate from D-ribulose 5-phosphate (non-oxidative stage): step 1/1. Its function is as follows. Catalyzes the reversible conversion of ribose-5-phosphate to ribulose 5-phosphate. In Roseiflexus sp. (strain RS-1), this protein is Ribose-5-phosphate isomerase A.